Reading from the N-terminus, the 175-residue chain is NADH-ubiquinone oxidoreductase chain 6 (175 aa).

A run of 6 helical transmembrane segments spans residues 1–21, 25–45, 51–71, 87–107, 112–132, and 148–168; these read MMYIVFIMSVLYVVGFIGFSS, PVYGGMSLVVSGGLGCGIIMG, LGLVVFLVYLGGMMVVFGYTI, VVLGAFLVGLLMEVFMIMWLF, ELVGFYFGGLEDLMVLGEGGF, and YGFWFLAMAGWMLFVSIFIAI.

The protein belongs to the complex I subunit 6 family. As to quaternary structure, core subunit of respiratory chain NADH dehydrogenase (Complex I) which is composed of 45 different subunits.

It is found in the mitochondrion inner membrane. It carries out the reaction a ubiquinone + NADH + 5 H(+)(in) = a ubiquinol + NAD(+) + 4 H(+)(out). Its function is as follows. Core subunit of the mitochondrial membrane respiratory chain NADH dehydrogenase (Complex I) which catalyzes electron transfer from NADH through the respiratory chain, using ubiquinone as an electron acceptor. Essential for the catalytic activity and assembly of complex I. In Loxodonta africana (African elephant), this protein is NADH-ubiquinone oxidoreductase chain 6 (MT-ND6).